A 266-amino-acid chain; its full sequence is 2-Cys peroxiredoxin BAS1, chloroplastic (266 aa).

Residues 1 to 16 (MASVASSTTLISSPSS) show a composition bias toward low complexity. Residues 1 to 25 (MASVASSTTLISSPSSRVFPAKSSL) are disordered. Residues 1 to 65 (MASVASSTTL…SSTSRRSFAV (65 aa)) constitute a chloroplast transit peptide. The Thioredoxin domain maps to 73–232 (PLVGNKAPDF…TMRTLQALQY (160 aa)). Cys119 serves as the catalytic Cysteine sulfenic acid (-SOH) intermediate.

This sequence belongs to the peroxiredoxin family. AhpC/Prx1 subfamily. As to quaternary structure, homodimer; disulfide-linked, upon oxidation. Interacts with the plastidial thioredoxin CDSP32. Interacts with the plastidial NADPH-dependent thioredoxin reductase ANTR-C.

The protein localises to the plastid. It localises to the chloroplast. It catalyses the reaction a hydroperoxide + [thioredoxin]-dithiol = an alcohol + [thioredoxin]-disulfide + H2O. Its function is as follows. Thiol-specific peroxidase that catalyzes the reduction of hydrogen peroxide and organic hydroperoxides to water and alcohols, respectively. Plays a role in cell protection against oxidative stress by detoxifying peroxides. May be an antioxidant enzyme particularly in the developing shoot and photosynthesizing leaf. This chain is 2-Cys peroxiredoxin BAS1, chloroplastic (BAS1), found in Arabidopsis thaliana (Mouse-ear cress).